A 78-amino-acid chain; its full sequence is Large ribosomal subunit protein eL20 (78 aa).

This sequence belongs to the eukaryotic ribosomal protein eL20 family. In terms of assembly, part of the 50S ribosomal subunit. Binds 23S rRNA.

This chain is Large ribosomal subunit protein eL20, found in Thermococcus sibiricus (strain DSM 12597 / MM 739).